A 404-amino-acid chain; its full sequence is Putative arginine deiminase (404 aa).

Residue cysteine 394 is the Amidino-cysteine intermediate of the active site.

Belongs to the arginine deiminase family.

The protein localises to the cytoplasm. The enzyme catalyses L-arginine + H2O = L-citrulline + NH4(+). It participates in amino-acid degradation; L-arginine degradation via ADI pathway; carbamoyl phosphate from L-arginine: step 1/2. The protein is Putative arginine deiminase (arcA) of Mycoplasma pneumoniae (strain ATCC 29342 / M129 / Subtype 1) (Mycoplasmoides pneumoniae).